The primary structure comprises 404 residues: Cysteine desulfurase IscS (404 aa).

Pyridoxal 5'-phosphate is bound by residues 75-76 (AT), asparagine 155, glutamine 183, and 203-205 (SAH). The residue at position 206 (lysine 206) is an N6-(pyridoxal phosphate)lysine. Pyridoxal 5'-phosphate is bound at residue threonine 243. Catalysis depends on cysteine 328, which acts as the Cysteine persulfide intermediate. Residue cysteine 328 coordinates [2Fe-2S] cluster.

The protein belongs to the class-V pyridoxal-phosphate-dependent aminotransferase family. NifS/IscS subfamily. As to quaternary structure, homodimer. Forms a heterotetramer with IscU, interacts with other sulfur acceptors. It depends on pyridoxal 5'-phosphate as a cofactor.

It is found in the cytoplasm. The enzyme catalyses (sulfur carrier)-H + L-cysteine = (sulfur carrier)-SH + L-alanine. The protein operates within cofactor biosynthesis; iron-sulfur cluster biosynthesis. In terms of biological role, master enzyme that delivers sulfur to a number of partners involved in Fe-S cluster assembly, tRNA modification or cofactor biosynthesis. Catalyzes the removal of elemental sulfur atoms from cysteine to produce alanine. Functions as a sulfur delivery protein for Fe-S cluster synthesis onto IscU, an Fe-S scaffold assembly protein, as well as other S acceptor proteins. This Colwellia psychrerythraea (strain 34H / ATCC BAA-681) (Vibrio psychroerythus) protein is Cysteine desulfurase IscS.